The chain runs to 397 residues: Erythromycin C-12 hydroxylase (397 aa).

Substrate is bound at residue His74–Glu75. Heme is bound by residues His81 and Arg85. Substrate is bound at residue Gln278. Arg279 is a heme binding site. The span at Arg307 to Arg322 shows a compositional bias: basic and acidic residues. The segment at Arg307–Gly326 is disordered. Heme contacts are provided by His337 and Cys339.

It belongs to the cytochrome P450 family. Monomer. Heme b serves as cofactor.

The catalysed reaction is erythromycin D + NADPH + O2 + H(+) = erythromycin C + NADP(+) + H2O. The protein operates within antibiotic biosynthesis; erythromycin biosynthesis. In terms of biological role, responsible for the C-12 hydroxylation of the macrolactone ring of erythromycin. Thus, EryK catalyzes the hydroxylation of erythromycin D (ErD) at the C-12 position to produce erythromycin C (ErC). Erythromycin B (ErB) is not a substrate for this enzyme. The sequence is that of Erythromycin C-12 hydroxylase (eryK) from Saccharopolyspora erythraea (strain ATCC 11635 / DSM 40517 / JCM 4748 / NBRC 13426 / NCIMB 8594 / NRRL 2338).